A 41-amino-acid chain; its full sequence is Competence-stimulating peptide type 1 (41 aa).

Residues 1-24 (MKNTVKLEQFVALKEKDLQKIKGG) constitute a propeptide that is removed on maturation.

It belongs to the ComC family.

It localises to the secreted. In terms of biological role, acts as a pheromone, induces cells to develop competence for genetic transformation. In Streptococcus pneumoniae, this protein is Competence-stimulating peptide type 1 (comC1).